A 119-amino-acid chain; its full sequence is Immunoglobulin heavy variable 2-26 (119 aa).

Residues Met1 to Ser19 form the signal peptide. A Pyrrolidone carboxylic acid modification is found at Gln20. A framework-1 region spans residues Gln20–Ser44. The 100-residue stretch at Gln20–Ile119 folds into the Ig-like domain. Cys41 and Cys116 form a disulfide bridge. The segment at Gly45–Gly54 is complementarity-determining-1. The tract at residues Val55–His71 is framework-2. A complementarity-determining-2 region spans residues Ile72–Lys78. Positions Ser79–Cys116 are framework-3. Residues Ala117 to Ile119 form a complementarity-determining-3 region.

In terms of assembly, immunoglobulins are composed of two identical heavy chains and two identical light chains; disulfide-linked.

The protein localises to the secreted. Its subcellular location is the cell membrane. In terms of biological role, v region of the variable domain of immunoglobulin heavy chains that participates in the antigen recognition. Immunoglobulins, also known as antibodies, are membrane-bound or secreted glycoproteins produced by B lymphocytes. In the recognition phase of humoral immunity, the membrane-bound immunoglobulins serve as receptors which, upon binding of a specific antigen, trigger the clonal expansion and differentiation of B lymphocytes into immunoglobulins-secreting plasma cells. Secreted immunoglobulins mediate the effector phase of humoral immunity, which results in the elimination of bound antigens. The antigen binding site is formed by the variable domain of one heavy chain, together with that of its associated light chain. Thus, each immunoglobulin has two antigen binding sites with remarkable affinity for a particular antigen. The variable domains are assembled by a process called V-(D)-J rearrangement and can then be subjected to somatic hypermutations which, after exposure to antigen and selection, allow affinity maturation for a particular antigen. The polypeptide is Immunoglobulin heavy variable 2-26 (Homo sapiens (Human)).